The sequence spans 182 residues: MRALLLIISFCLVAVLQAQDSSFLAFNNGNFSGKWFLKALVSEDDIPINKVSPMLILVLNNGDIELSITHMIYDQCLEVTTILEKTDVPGQYLAFEGKTHLQVQLSSVKGHYMLYCDGEIEGMRFLMTQLIGRDPQENLEALEEFKVFTQIKGLVAENLVILEQMEKCEPESFYELPSRPSE.

An N-terminal signal peptide occupies residues M1 to A18. The N-linked (GlcNAc...) asparagine glycan is linked to N30. A disulfide bond links C76 and C168.

The protein belongs to the calycin superfamily. Lipocalin family. Specifically expressed in vomeronasal and posterior glands of the nasal septum, the ducts of which open into the lumen of the vomeronasal organ.

It localises to the secreted. Functionally, transport of lipophilic molecules, possible pheromone-carrier. In Mus musculus (Mouse), this protein is Vomeronasal secretory protein 1 (Lcn3).